A 145-amino-acid chain; its full sequence is MVMSPGSLLLVFLLSLDVIPPTLAQDNYRYIKFLTQHYDAKPTGRDYRYCESMMKKRKLTSPCKEVNTFIHDTKNNIKAICGENGRPYGVNFRISNSRFQVTTCTHKGGSPRPPCQYNAFKDFRYIVIACEDGWPVHFDESFISP.

The N-terminal stretch at Met-1–Ala-24 is a signal peptide. The residue at position 25 (Gln-25) is a Pyrrolidone carboxylic acid. The Proton acceptor role is filled by His-37. Disulfide bonds link Cys-50–Cys-104, Cys-63–Cys-115, and Cys-81–Cys-130. The Nucleolar localization signal signature appears at Lys-55 to Leu-59. Zn(2+) is bound by residues Glu-65 and His-106. His-137 (proton donor) is an active-site residue.

The protein belongs to the pancreatic ribonuclease family.

It is found in the cytoplasmic vesicle. The protein resides in the secretory vesicle lumen. Its subcellular location is the secreted. The protein localises to the nucleus. It localises to the nucleolus. With respect to regulation, divalent metal ions, such as Cu2+ and Zn2+, may inhibit the ribonucleolytic activity. Has low ribonuclease activity (in vitro). In Mus musculus (Mouse), this protein is Angiogenin-3 (Ang3).